The chain runs to 264 residues: MGQKIHPTGFRLAVSRNWASRWYANNTKFAGMLKEDIEVRDFLKKKLKNASVGRVVIERPARNARITIYSSRPGVVIGKKGEDIELLKAELQRRMGVPVHVNIEEIRKPETDAQLIADSITQQLERRIMFRRAMKRAMQNAMRLGAQGIKIMSSGRLNGIEIARTEWYREGRVPLHTLRADIDYGFSEAETTYGIIGVKVWVYKGDHLGRNDAPVVEEPQDDRRRRPGRPEGRRREGEGRPGGNRRGGAGAGRRAAPGDAKSGE.

Residues 39 to 107 (VRDFLKKKLK…PVHVNIEEIR (69 aa)) form the KH type-2 domain. The interval 211-264 (NDAPVVEEPQDDRRRRPGRPEGRRREGEGRPGGNRRGGAGAGRRAAPGDAKSGE) is disordered. A compositionally biased stretch (basic and acidic residues) spans 221-239 (DDRRRRPGRPEGRRREGEG). Residues 240–251 (RPGGNRRGGAGA) are compositionally biased toward gly residues.

This sequence belongs to the universal ribosomal protein uS3 family. Part of the 30S ribosomal subunit. Forms a tight complex with proteins S10 and S14.

Functionally, binds the lower part of the 30S subunit head. Binds mRNA in the 70S ribosome, positioning it for translation. This chain is Small ribosomal subunit protein uS3, found in Cupriavidus pinatubonensis (strain JMP 134 / LMG 1197) (Cupriavidus necator (strain JMP 134)).